Consider the following 56-residue polypeptide: Large ribosomal subunit protein bL32 (56 aa).

Residues 1–34 form a disordered region; the sequence is MAVQQNKPTRSKRGMRRSHDALTTSTVSVDKASG.

It belongs to the bacterial ribosomal protein bL32 family.

This chain is Large ribosomal subunit protein bL32, found in Sodalis glossinidius (strain morsitans).